Consider the following 295-residue polypeptide: MRWPPWASDSQAQQQTAKHDEHDERQAAAKSTTTSKKKDWESSVTAIDWAAFTEARTIIPTLILTSGFLGAFYIHRRYLRRFPDAVSITPSYFRRRSLLGQVTSVGDGDNFRIYHTPGGRLAGWGWLPWKKIPTSKKELRDKTVHIRLAGIDAPELAHFGRPEQPFAREAHQWLTSYLLGRRVRAYIHRPDQYQRAVASVYVRRLLDFPPLRRRDVSYEMLKRGLATVYEAKIGAEFGGEAMERKYKKAEWWAKLRGVGLWKDYRRNKTKWESPREYKTRMGLEEAAQPPVETKK.

The interval 1–35 (MRWPPWASDSQAQQQTAKHDEHDERQAAAKSTTTS) is disordered. Residues 17–27 (AKHDEHDERQA) show a composition bias toward basic and acidic residues. The helical transmembrane segment at 52 to 74 (FTEARTIIPTLILTSGFLGAFYI) threads the bilayer. In terms of domain architecture, TNase-like spans 96-263 (RSLLGQVTSV…KLRGVGLWKD (168 aa)). Residue arginine 147 is part of the active site. Aspartate 152 contacts Ca(2+). Residues glutamate 155 and arginine 195 contribute to the active site.

The protein belongs to the LCL3 family.

Its subcellular location is the mitochondrion. It localises to the membrane. This is Probable endonuclease lcl3 (lcl3) from Neosartorya fischeri (strain ATCC 1020 / DSM 3700 / CBS 544.65 / FGSC A1164 / JCM 1740 / NRRL 181 / WB 181) (Aspergillus fischerianus).